Here is a 298-residue protein sequence, read N- to C-terminus: Leucine-rich repeat-containing protein 38 (298 aa).

Residues 1–31 (MSLCVAPRHPTGAAAALGLGSLLVLLGPGRA) form the signal peptide. 2 disulfide bridges follow: Cys32–Cys38 and Cys36–Cys46. The 29-residue stretch at 32–60 (CPAGCACTDPHTVDCRDRGLPSVPDPFPL) folds into the LRRNT domain. The Extracellular portion of the chain corresponds to 32-251 (CPAGCACTDP…ECKFSLSLTD (220 aa)). LRR repeat units lie at residues 61–82 (DVRKLLVAGNRIQQIPEDFFIF), 85–106 (DLVYLDFRNNSLRSLEEGTFSG), 109–130 (KLAFLDLSYNNLTQLGAGAFRS), 133–154 (RLVKLSLANNHLAGVHEAAFES), and 157–177 (SLQVLELNDNNLRSLNVAALD). N-linked (GlcNAc...) asparagine glycosylation is present at Asn119. The LRRCT domain maps to 190 to 245 (NPWLCDCDFAHLFSWIQENTSKLPKGLDAIQCSLPMEDRRVALRELSEASFSECKF). 2 disulfides stabilise this stretch: Cys194–Cys221 and Cys196–Cys243. Residues 252–272 (LFIIIFSGVAVSIAAIISSFF) form a helical membrane-spanning segment. The Cytoplasmic portion of the chain corresponds to 273 to 298 (LATVVQCFQRCAPNKDTEDEDDDEDD).

Interacts with KCNMA1.

The protein localises to the cell membrane. Its function is as follows. Auxiliary protein of the large-conductance, voltage and calcium-activated potassium channel (BK alpha). Modulates gating properties by producing a marked shift in the BK channel's voltage dependence of activation in the hyperpolarizing direction, and in the absence of calcium. The sequence is that of Leucine-rich repeat-containing protein 38 (Lrrc38) from Mus musculus (Mouse).